Reading from the N-terminus, the 142-residue chain is MAKKVTGYIKLQIPAAKATPAPPVGPALGQHGVNIVQFTKEFNARTANQEGMIIPVVITVYADRSFSFITKTPPAAVLLKKACNLKSGSAAPNKTKVATIKKSEVQKIAELKMPDLNAANVETAISMISGTARSMGITVVED.

Belongs to the universal ribosomal protein uL11 family. As to quaternary structure, part of the ribosomal stalk of the 50S ribosomal subunit. Interacts with L10 and the large rRNA to form the base of the stalk. L10 forms an elongated spine to which L12 dimers bind in a sequential fashion forming a multimeric L10(L12)X complex. In terms of processing, one or more lysine residues are methylated.

Forms part of the ribosomal stalk which helps the ribosome interact with GTP-bound translation factors. This chain is Large ribosomal subunit protein uL11, found in Lachnoclostridium phytofermentans (strain ATCC 700394 / DSM 18823 / ISDg) (Clostridium phytofermentans).